Here is a 608-residue protein sequence, read N- to C-terminus: Cilia- and flagella-associated protein 100 (608 aa).

The span at 1 to 17 (MSETLSNIVSKNMTNDK) shows a compositional bias: polar residues. The segment at 1-57 (MSETLSNIVSKNMTNDKNSLESMNISSSSSAEENPKKQAKKXKERGPDPSANPFHLS) is disordered. Residues 20–32 (LESMNISSSSSAE) are compositionally biased toward low complexity. Coiled-coil stretches lie at residues 164 to 196 (TLDCKRREIQRLETLATKEEARLQQAEKSLAKD) and 230 to 257 (LEIRDLTTQIVNIKSEISRFEDTLQHYK). Disordered stretches follow at residues 291-320 (ASKDGSVNSTPGDKGPGIKGKASSVWAKEG) and 339-377 (LSSPQQGSQPSESSGGNSRGSNSPIPLTQEDTDSDGEEP). Residues 339-361 (LSSPQQGSQPSESSGGNSRGSNS) show a composition bias toward low complexity. Coiled coils occupy residues 385 to 435 (QQLL…QLKQ) and 500 to 575 (TVQM…RGRT).

The protein belongs to the CFAP100 family.

It is found in the cytoplasm. Its subcellular location is the cytoskeleton. The protein localises to the cilium axoneme. In terms of biological role, may play a role in ciliary/flagellar motility by regulating the assembly and the activity of axonemal inner dynein arm. This Macaca fascicularis (Crab-eating macaque) protein is Cilia- and flagella-associated protein 100.